The following is a 208-amino-acid chain: Guanylate kinase (208 aa).

Positions 4–185 (GNLYILSAPS…TLKDLQSILQ (182 aa)) constitute a Guanylate kinase-like domain. Residue 11–18 (APSGAGKS) participates in ATP binding.

It belongs to the guanylate kinase family.

It is found in the cytoplasm. The enzyme catalyses GMP + ATP = GDP + ADP. Its function is as follows. Essential for recycling GMP and indirectly, cGMP. In Haemophilus influenzae (strain 86-028NP), this protein is Guanylate kinase.